The primary structure comprises 88 residues: Large ribosomal subunit protein bL27 (88 aa).

The tract at residues 1 to 25 (MAHKKAGGSSRNGRDSPGQRRGIKR) is disordered.

Belongs to the bacterial ribosomal protein bL27 family.

The protein is Large ribosomal subunit protein bL27 (rpmA) of Lawsonia intracellularis.